A 125-amino-acid chain; its full sequence is Phosphoribosyl-AMP cyclohydrolase (125 aa).

Asp-74 provides a ligand contact to Mg(2+). Cys-75 is a Zn(2+) binding site. Mg(2+) is bound by residues Asp-76 and Asp-78. Residues Cys-92 and Cys-99 each coordinate Zn(2+).

It belongs to the PRA-CH family. In terms of assembly, homodimer. It depends on Mg(2+) as a cofactor. The cofactor is Zn(2+).

It is found in the cytoplasm. The catalysed reaction is 1-(5-phospho-beta-D-ribosyl)-5'-AMP + H2O = 1-(5-phospho-beta-D-ribosyl)-5-[(5-phospho-beta-D-ribosylamino)methylideneamino]imidazole-4-carboxamide. The protein operates within amino-acid biosynthesis; L-histidine biosynthesis; L-histidine from 5-phospho-alpha-D-ribose 1-diphosphate: step 3/9. Its function is as follows. Catalyzes the hydrolysis of the adenine ring of phosphoribosyl-AMP. The chain is Phosphoribosyl-AMP cyclohydrolase from Geobacter metallireducens (strain ATCC 53774 / DSM 7210 / GS-15).